Consider the following 209-residue polypeptide: Imidazoleglycerol-phosphate dehydratase (209 aa).

The protein belongs to the imidazoleglycerol-phosphate dehydratase family.

Its subcellular location is the cytoplasm. It catalyses the reaction D-erythro-1-(imidazol-4-yl)glycerol 3-phosphate = 3-(imidazol-4-yl)-2-oxopropyl phosphate + H2O. The protein operates within amino-acid biosynthesis; L-histidine biosynthesis; L-histidine from 5-phospho-alpha-D-ribose 1-diphosphate: step 6/9. The sequence is that of Imidazoleglycerol-phosphate dehydratase from Microcystis aeruginosa (strain NIES-843 / IAM M-2473).